Reading from the N-terminus, the 214-residue chain is EEF1A lysine methyltransferase 1 (214 aa).

N-acetylserine is present on Ser2. Phosphoserine is present on Ser2.

The protein belongs to the class I-like SAM-binding methyltransferase superfamily. EFM5 family.

Its subcellular location is the cytoplasm. It carries out the reaction L-lysyl-[protein] + 3 S-adenosyl-L-methionine = N(6),N(6),N(6)-trimethyl-L-lysyl-[protein] + 3 S-adenosyl-L-homocysteine + 3 H(+). Its function is as follows. Protein-lysine methyltransferase that selectively catalyzes the trimethylation of EEF1A at 'Lys-79'. The sequence is that of EEF1A lysine methyltransferase 1 from Mus musculus (Mouse).